We begin with the raw amino-acid sequence, 907 residues long: Anaphase-promoting complex subunit 2 (907 aa).

Disordered regions lie at residues 203-228 and 790-838; these read NNSK…EEES and NKEK…AKEK. Acidic residues-rich tracts occupy residues 214-226 and 804-830; these read QQEE…ENEE and ENDD…EEEE.

This sequence belongs to the cullin family. The APC/C is composed of at least 13 subunits that stay tightly associated throughout the cell cycle: anapc1, anapc2, anapc3, anapc4, anapc5, anapc6, anapc7, anapc8, anapc10, anapc11, cdc20, cdc26 and cdh1.

Its subcellular location is the nucleus. Its pathway is protein modification; protein ubiquitination. Component of the anaphase promoting complex/cyclosome (APC/C), a cell cycle-regulated E3 ubiquitin-protein ligase complex that controls progression through mitosis and the G1 phase of the cell cycle. The protein is Anaphase-promoting complex subunit 2 (anapc2) of Dictyostelium discoideum (Social amoeba).